The following is a 274-amino-acid chain: 4-hydroxy-tetrahydrodipicolinate reductase (274 aa).

An NAD(+)-binding site is contributed by 7 to 12 (GVTGRM). R40 contacts NADP(+). NAD(+) is bound by residues 103–105 (GTT) and 127–130 (SANF). H160 acts as the Proton donor/acceptor in catalysis. Residue H161 participates in (S)-2,3,4,5-tetrahydrodipicolinate binding. Residue K164 is the Proton donor of the active site. (S)-2,3,4,5-tetrahydrodipicolinate is bound at residue 170–171 (GT).

The protein belongs to the DapB family. Homotetramer.

It is found in the cytoplasm. It carries out the reaction (S)-2,3,4,5-tetrahydrodipicolinate + NAD(+) + H2O = (2S,4S)-4-hydroxy-2,3,4,5-tetrahydrodipicolinate + NADH + H(+). The catalysed reaction is (S)-2,3,4,5-tetrahydrodipicolinate + NADP(+) + H2O = (2S,4S)-4-hydroxy-2,3,4,5-tetrahydrodipicolinate + NADPH + H(+). The protein operates within amino-acid biosynthesis; L-lysine biosynthesis via DAP pathway; (S)-tetrahydrodipicolinate from L-aspartate: step 4/4. Functionally, catalyzes the conversion of 4-hydroxy-tetrahydrodipicolinate (HTPA) to tetrahydrodipicolinate. The chain is 4-hydroxy-tetrahydrodipicolinate reductase from Blochmanniella floridana.